We begin with the raw amino-acid sequence, 983 residues long: Serine/threonine-protein kinase N2 (983 aa).

The REM-1 1 domain occupies 33 to 109 (KLDFSDTMVQ…LQELNAHIVV (77 aa)). Lys77 is modified (N6-acetyllysine). Positions 107 to 135 (IVVSDPEDSTDCPRTPDTPNSDSRSSTSN) are disordered. A Phosphoserine modification is found at Ser110. Phosphothreonine occurs at positions 121 and 124. The segment covering 121-135 (TPDTPNSDSRSSTSN) has biased composition (low complexity). 2 consecutive REM-1 domains span residues 121-203 (TPDT…TNEL) and 204-284 (AFDN…ELPR). A phosphoserine mark is found at Ser301, Ser305, Ser359, and Ser361. The segment at 351–382 (TSVALPGWSPSDNRSSFMSRTSKSKSGSSRNL) is disordered. One can recognise a C2 domain in the interval 352 to 472 (SVALPGWSPS…LYLEPQGTLF (121 aa)). Positions 364–380 (RSSFMSRTSKSKSGSSR) are enriched in low complexity. Residues 381 to 462 (NLLKTDDLSN…FLDNQRHGMC (82 aa)) form a necessary to rescue apical junction formation region. Phosphoserine occurs at positions 534, 582, 619, and 630. The interval 553–588 (LAPPASDSTVTKLDFDLEPEPPPAPPRASSLGETDE) is disordered. The region spanning 656–915 (FRCCAVLGRG…AEDVKKHPFF (260 aa)) is the Protein kinase domain. ATP is bound by residues 662 to 670 (LGRGHFGKV) and Lys685. Asp781 serves as the catalytic Proton acceptor. Thr815 bears the Phosphothreonine; by PDPK1 mark. The interval 916–976 (RLTDWSALMD…EEEQEMFHDF (61 aa)) is necessary for the catalytic activity. One can recognise an AGC-kinase C-terminal domain in the interval 916 to 983 (RLTDWSALMD…HDFDYVADWC (68 aa)). Ser951 is subject to Phosphoserine. Thr957 is subject to Phosphothreonine. Residues 977 to 983 (DYVADWC) are negatively regulates the responsiveness of the catalytic activity by cardiolipin and is required for optimal activation by the GTP-bound RhoA.

This sequence belongs to the protein kinase superfamily. AGC Ser/Thr protein kinase family. PKC subfamily. In terms of assembly, interacts (via the REM repeats) with RHOA (GTP-bound form preferentially) and interacts (via the REM repeats) with RAC1 (GTP-bound form preferentially); the interactions induce its autophosphorylation. Interacts with NCK1 (via SH3 domains). Interacts with RHOC. Interacts with NCK1 and NCK2. Interacts with CD44. Interacts (via C-terminal kinase domain) with PDPK1; the interaction stimulates PDPK1 kinase activity. Interacts with MAP3K2; the interaction activates PRK2 kinase activity in a MAP3K2-independent kinase activity. Interacts (via C-terminal domain) with AKT1; the interaction occurs with the C-terminal cleavage product of PRK2 in apoptotic cells. Interacts (via C-terminus) with PTPN13 (via PDZ 3 domain). Interacts with CDK10. In terms of processing, phosphorylated during mitosis. Autophosphorylated. Phosphorylated. Phosphorylated by CDK10. Activated by limited proteolysis with trypsin. Proteolytically cleaved by caspase-3 during the induction of apoptotic cell death. In terms of tissue distribution, ubiquitous. Highly expressed in liver and lung Expressed in astrocytes (at protein level). Ubiquitous.

Its subcellular location is the cytoplasm. It localises to the nucleus. The protein localises to the membrane. It is found in the cell projection. The protein resides in the lamellipodium. Its subcellular location is the cytoskeleton. It localises to the cleavage furrow. The protein localises to the midbody. It is found in the cell junction. The enzyme catalyses L-seryl-[protein] + ATP = O-phospho-L-seryl-[protein] + ADP + H(+). It carries out the reaction L-threonyl-[protein] + ATP = O-phospho-L-threonyl-[protein] + ADP + H(+). Kinase activity is activated upon binding to GTP-bound Rho1/Rac1 GTPases. Activated by caspase-3 (CASP3) cleavage during apoptosis. Activated by lipids, particularly cardiolipin and to a lesser extent by other acidic phospholipids and unsaturated fatty acids. Two specific sites, Thr-815 (activation loop of the kinase domain) and Thr-957 (turn motif), need to be phosphorylated for its full activation. In terms of biological role, PKC-related serine/threonine-protein kinase and Rho/Rac effector protein that participates in specific signal transduction responses in the cell. Plays a role in the regulation of cell cycle progression, actin cytoskeleton assembly, cell migration, cell adhesion, tumor cell invasion and transcription activation signaling processes. Phosphorylates CTTN in hyaluronan-induced astrocytes and hence decreases CTTN ability to associate with filamentous actin. Phosphorylates HDAC5, therefore lead to impair HDAC5 import. Direct RhoA target required for the regulation of the maturation of primordial junctions into apical junction formation in bronchial epithelial cells. Required for G2/M phases of the cell cycle progression and abscission during cytokinesis in a ECT2-dependent manner. Stimulates FYN kinase activity that is required for establishment of skin cell-cell adhesion during keratinocytes differentiation. Regulates epithelial bladder cells speed and direction of movement during cell migration and tumor cell invasion. Inhibits Akt pro-survival-induced kinase activity. Mediates Rho protein-induced transcriptional activation via the c-fos serum response factor (SRF). Involved in the negative regulation of ciliogenesis. The chain is Serine/threonine-protein kinase N2 (Pkn2) from Mus musculus (Mouse).